Consider the following 212-residue polypeptide: Peptide methionine sulfoxide reductase MsrA (212 aa).

Residue C52 is part of the active site.

It belongs to the MsrA Met sulfoxide reductase family.

It catalyses the reaction L-methionyl-[protein] + [thioredoxin]-disulfide + H2O = L-methionyl-(S)-S-oxide-[protein] + [thioredoxin]-dithiol. It carries out the reaction [thioredoxin]-disulfide + L-methionine + H2O = L-methionine (S)-S-oxide + [thioredoxin]-dithiol. Functionally, has an important function as a repair enzyme for proteins that have been inactivated by oxidation. Catalyzes the reversible oxidation-reduction of methionine sulfoxide in proteins to methionine. This Escherichia coli (strain ATCC 8739 / DSM 1576 / NBRC 3972 / NCIMB 8545 / WDCM 00012 / Crooks) protein is Peptide methionine sulfoxide reductase MsrA.